A 429-amino-acid chain; its full sequence is UDP-N-acetylglucosamine 1-carboxyvinyltransferase (429 aa).

22 to 23 (KN) is a binding site for phosphoenolpyruvate. Arginine 102 contacts UDP-N-acetyl-alpha-D-glucosamine. Cysteine 126 (proton donor) is an active-site residue. Cysteine 126 bears the 2-(S-cysteinyl)pyruvic acid O-phosphothioketal mark. UDP-N-acetyl-alpha-D-glucosamine is bound by residues 171–174 (KVSV), aspartate 316, and isoleucine 338.

This sequence belongs to the EPSP synthase family. MurA subfamily.

Its subcellular location is the cytoplasm. The catalysed reaction is phosphoenolpyruvate + UDP-N-acetyl-alpha-D-glucosamine = UDP-N-acetyl-3-O-(1-carboxyvinyl)-alpha-D-glucosamine + phosphate. It participates in cell wall biogenesis; peptidoglycan biosynthesis. Its function is as follows. Cell wall formation. Adds enolpyruvyl to UDP-N-acetylglucosamine. The sequence is that of UDP-N-acetylglucosamine 1-carboxyvinyltransferase from Xanthobacter autotrophicus (strain ATCC BAA-1158 / Py2).